Reading from the N-terminus, the 213-residue chain is Pyridoxine/pyridoxamine 5'-phosphate oxidase (213 aa).

Residues 60–65 (RMVLMK), 75–76 (YS), Lys-82, and Gln-104 contribute to the FMN site. Lys-65 is a substrate binding site. Substrate-binding residues include Tyr-122, Arg-126, and Ser-130. FMN-binding positions include 139-140 (QS) and Trp-184. 190–192 (RLH) provides a ligand contact to substrate. Arg-194 contributes to the FMN binding site.

The protein belongs to the pyridoxamine 5'-phosphate oxidase family. In terms of assembly, homodimer. It depends on FMN as a cofactor.

The catalysed reaction is pyridoxamine 5'-phosphate + O2 + H2O = pyridoxal 5'-phosphate + H2O2 + NH4(+). It carries out the reaction pyridoxine 5'-phosphate + O2 = pyridoxal 5'-phosphate + H2O2. The protein operates within cofactor metabolism; pyridoxal 5'-phosphate salvage; pyridoxal 5'-phosphate from pyridoxamine 5'-phosphate: step 1/1. Its pathway is cofactor metabolism; pyridoxal 5'-phosphate salvage; pyridoxal 5'-phosphate from pyridoxine 5'-phosphate: step 1/1. Its function is as follows. Catalyzes the oxidation of either pyridoxine 5'-phosphate (PNP) or pyridoxamine 5'-phosphate (PMP) into pyridoxal 5'-phosphate (PLP). This chain is Pyridoxine/pyridoxamine 5'-phosphate oxidase, found in Rhodopseudomonas palustris (strain BisB18).